The following is a 387-amino-acid chain: Zinc finger transcription factor YY1 (387 aa).

C2H2-type zinc fingers lie at residues 79–103, 108–132, 138–162, 168–193, and 230–255; these read FLCS…SHIH, YVCD…YLIH, YICT…MKTH, HICP…AAYH, and YACP…KREH. Residues 201–290 are MED18-binding; that stretch reads TPKYTPPAEK…DDGSDQDVYR (90 aa). The disordered stretch occupies residues 258–387; sequence HLQEENADTP…DDDEETEYED (130 aa). Position 284 is a phosphoserine (Ser-284). Basic residues predominate over residues 291–305; the sequence is KHASNGKGQTHKQQS. The Nuclear localization signal motif lies at 319-326; sequence GKKGSTSS. A coiled-coil region spans residues 339 to 367; the sequence is AKETFEEVEREEEEDSEETEEDRDNVEDG. Acidic residues-rich tracts occupy residues 344–363 and 373–387; these read EEVE…DRDN and NNED…EYED.

In terms of assembly, interacts with MED18 to suppress disease susceptibility via the repression of genes glutaredoxins GRX480, GRXS13 and thioredoxin TRX-h5. As to expression, mostly expressed in flowers, to a lower extent in seedlings, stems and leaves, and, at low levels, in roots and senescent leaves.

Its subcellular location is the nucleus. Its function is as follows. Dual-function transcription factor with both repression and activation activities. Binds to 5'-CCATATT-3' motif in target gene promoters (e.g. ABR1). Also binds to G-rich DNA motif 5'-GGGGGCAGTGG-3'. Regulates the expression of genes involved in diverse cellular pathways, including glucose metabolism, photosynthesis, phototropism and stress response (e.g. salt, drought and osmotic stress). Regulates plant immunity, especially during necrotrophic fungal infection (e.g. B.cinerea). Binds to ABR1 promoter and promotes its expression, thus negatively regulating the abscisic acid (ABA) signaling pathway. Represses ABA- and salt-responsive genes expression. The sequence is that of Zinc finger transcription factor YY1 from Arabidopsis thaliana (Mouse-ear cress).